The following is a 182-amino-acid chain: ATP-dependent protease subunit HslV (182 aa).

Residue Thr-7 is part of the active site. Positions 162, 165, and 168 each coordinate Na(+).

Belongs to the peptidase T1B family. HslV subfamily. A double ring-shaped homohexamer of HslV is capped on each side by a ring-shaped HslU homohexamer. The assembly of the HslU/HslV complex is dependent on binding of ATP.

It is found in the cytoplasm. It catalyses the reaction ATP-dependent cleavage of peptide bonds with broad specificity.. With respect to regulation, allosterically activated by HslU binding. Its function is as follows. Protease subunit of a proteasome-like degradation complex believed to be a general protein degrading machinery. This is ATP-dependent protease subunit HslV from Legionella pneumophila subsp. pneumophila (strain Philadelphia 1 / ATCC 33152 / DSM 7513).